The sequence spans 474 residues: MPREIITLQVGQCGNQIGMEFWKQLCLEHGISKDGILEDFATQGGDRKDVFFYQADDQHYIPRALLIDLEPRVINGIQNGDYRNLYNHENIFVADHGGGAGNNWASGYHQGKGVEEEIMDMIDREADGSDSLEGFVLCHSIAGGTGSGMGSYLLETLNDRYSKKLVQTYSVFPNQMETSDVVVQPYNSLLTLKRLTLNADCVVVLDNTALGRIAVERLHLTNPTFAQTNSLVSTVMSASTTTLRYPGYMNNDLVGLLASLIPTPRCHFLMTGYTPLTVERQANVIRKTTVLDVMRRLLQTKNIMVSSYARNKEASQAKYISILNIIQGEVDPTQVHESLQRIRERKLVNFIEWGPASIQVALSKKSPYVQTAHRVSGLMLASHTSIRHLFSKCLSQYDKLRKKQAFLDNYRKFPMFADNDLSEFDESRDIIESLVDEYKACESPDYIKWGMEDPEQLMTGEGNASGVVDPKLAF.

142-148 (AGGTGSG) lines the GTP pocket.

The protein belongs to the tubulin family. As to quaternary structure, gamma-tubulin complex is composed of gamma-tubulin and GCP proteins.

Its subcellular location is the cytoplasm. The protein resides in the cytoskeleton. It is found in the microtubule organizing center. The protein localises to the nucleus. It localises to the cell cortex. In terms of biological role, tubulin is the major constituent of microtubules. The gamma chain is found at microtubule organizing centers (MTOC) such as the spindle poles, suggesting that it is involved in the minus-end nucleation of microtubule assembly. Functionally, gamma-tubulin complex is essential for the control of microtubular network remodeling in the course of initiation and development of giant-feeding cells, and for the successful reproduction of nematodes (e.g. Meloidogyne spp.) in their plant hosts. This is Tubulin gamma-1 chain (TUBG1) from Arabidopsis thaliana (Mouse-ear cress).